Consider the following 244-residue polypeptide: 5'-nucleotidase SurE (244 aa).

Residues Asp8, Asp9, Ser39, and Asn96 each contribute to the a divalent metal cation site.

It belongs to the SurE nucleotidase family. The cofactor is a divalent metal cation.

It localises to the cytoplasm. The enzyme catalyses a ribonucleoside 5'-phosphate + H2O = a ribonucleoside + phosphate. Nucleotidase that shows phosphatase activity on nucleoside 5'-monophosphates. The protein is 5'-nucleotidase SurE of Thermus thermophilus (strain ATCC 27634 / DSM 579 / HB8).